The following is an 897-amino-acid chain: Translation initiation factor IF-2 (897 aa).

The interval 52 to 310 (EHGSAPDKLT…LLQQGFQKPA (259 aa)) is disordered. A compositionally biased stretch (polar residues) spans 68-82 (STLNVPGTGGKSKSV). Composition is skewed to basic and acidic residues over residues 85-159 (EVRK…KDKV) and 166-217 (EMTK…ENEK). Residues 256-272 (GRTRTASKTARPQKKGN) show a composition bias toward basic residues. Positions 273–286 (KHAESKADREEARA) are enriched in basic and acidic residues. The region spanning 396-565 (PRAPVVTIMG…LLQAEVLELK (170 aa)) is the tr-type G domain. The G1 stretch occupies residues 405 to 412 (GHVDHGKT). 405–412 (GHVDHGKT) contributes to the GTP binding site. The interval 430–434 (GITQH) is G2. Residues 451–454 (DTPG) are G3. GTP-binding positions include 451 to 455 (DTPGH) and 505 to 508 (NKID). The segment at 505-508 (NKID) is G4. A G5 region spans residues 541–543 (SAK).

The protein belongs to the TRAFAC class translation factor GTPase superfamily. Classic translation factor GTPase family. IF-2 subfamily.

The protein resides in the cytoplasm. One of the essential components for the initiation of protein synthesis. Protects formylmethionyl-tRNA from spontaneous hydrolysis and promotes its binding to the 30S ribosomal subunits. Also involved in the hydrolysis of GTP during the formation of the 70S ribosomal complex. The polypeptide is Translation initiation factor IF-2 (infB) (Enterobacter cloacae).